We begin with the raw amino-acid sequence, 326 residues long: Protein TMED8 (326 aa).

The interval 1-80 is disordered; that stretch reads MSDLQAAEGP…VSPGSKDATE (80 aa). The region spanning 160–324 is the GOLD domain; the sequence is PPCIWTFAKV…NKTLYFHIYY (165 aa). N6-acetyllysine is present on Lys-170. The disordered stretch occupies residues 238–268; it reads DSCDDEDEEEEEEEEIEEPVPAGDVERGSRS. The span at 239–255 shows a compositional bias: acidic residues; it reads SCDDEDEEEEEEEEIEE.

The sequence is that of Protein TMED8 (TMED8) from Pongo abelii (Sumatran orangutan).